Here is a 184-residue protein sequence, read N- to C-terminus: Female-specific protein transformer (184 aa).

Basic and acidic residues-rich tracts occupy residues 1–39 (MKMD…DSRK) and 49–58 (DEVREQDRIR). 2 disordered regions span residues 1–123 (MKMD…PKII) and 146–184 (YQRL…RPPY). Basic residues-rich tracts occupy residues 59 to 75 (SLRQ…RSRS) and 84 to 114 (SRHR…RSPH). A compositionally biased stretch (pro residues) spans 150-159 (PRPPPFPPAP).

The protein resides in the nucleus speckle. Its function is as follows. Member of the regulatory pathway controlling female somatic sexual differentiation, regulated by Sxl. Activates dsx female-specific splicing by promoting the formation of a splicing enhancer complex which consists of tra, tra2 and sr proteins. This chain is Female-specific protein transformer (tra), found in Drosophila simulans (Fruit fly).